A 377-amino-acid chain; its full sequence is Histone deacetylase 8 (377 aa).

Residues 14 to 324 (LPPVYIYSPE…WTYLTGVILG (311 aa)) form a histone deacetylase region. Ser-39 is subject to Phosphoserine. Asp-101 serves as a coordination point for substrate. The Proton acceptor role is filled by His-143. Gly-151 contacts substrate. A divalent metal cation is bound by residues Asp-178, His-180, and Asp-267. Tyr-306 lines the substrate pocket.

It belongs to the histone deacetylase family. HD type 1 subfamily. As to quaternary structure, interacts with CBFA2T3. Interacts with phosphorylated SMG5/EST1B; this interaction protects SMG5 from ubiquitin-mediated degradation. Associates with alpha-SMA (smooth muscle alpha-actin). A divalent metal cation serves as cofactor. In terms of processing, phosphorylated by PKA on serine 39. Phosphorylation reduces deacetylase activity observed preferentially on histones H3 and H4.

It is found in the nucleus. The protein localises to the chromosome. Its subcellular location is the cytoplasm. It carries out the reaction N(6)-acetyl-L-lysyl-[histone] + H2O = L-lysyl-[histone] + acetate. The enzyme catalyses N(6)-acetyl-L-lysyl-[protein] + H2O = L-lysyl-[protein] + acetate. The catalysed reaction is N(6)-(2E)-butenoyl-L-lysyl-[protein] + H2O = (2E)-2-butenoate + L-lysyl-[protein]. Its activity is regulated as follows. Its activity is inhibited by trichostatin A (TSA) and butyrate, 2 well known histone deacetylase inhibitors. histone deacetylase inhibitor. In terms of biological role, histone deacetylase that catalyzes the deacetylation of lysine residues on the N-terminal part of the core histones (H2A, H2B, H3 and H4). Histone deacetylation gives a tag for epigenetic repression and plays an important role in transcriptional regulation, cell cycle progression and developmental events. Histone deacetylases act via the formation of large multiprotein complexes. Also involved in the deacetylation of cohesin complex protein SMC3 regulating release of cohesin complexes from chromatin. May play a role in smooth muscle cell contractility. In addition to protein deacetylase activity, also has protein-lysine deacylase activity: acts as a protein decrotonylase by mediating decrotonylation ((2E)-butenoyl) of histones. This chain is Histone deacetylase 8 (Hdac8), found in Mus musculus (Mouse).